Consider the following 454-residue polypeptide: MVDLVSSLPDDLLGHILSLLTTKEAALTSILSKRWRYLIAFVPYLEFDDSAFLNPEEGKQTREGTRQSFIDFVDRVLALHGDSPIRKFSLKCKTGVDLDLLNQWICNVLQRGVLLIDLSMDLGHRCMFIEIFMSRTLVELKLGSGCRIAFGPEHISALPMLKTLTLDSVSWSDSGQLERLLSACPALEALNLANVHGSYPNATVSIASLKTLTIKSVSLSGPAHVFSFDTPNLLCLNYTALFEDDYPLVNLEYLVEAQIKFVLTDRLIKLVSVRKNGLLMLSEVQKLIRGISSVRKLYLSPGTLQVLGQCSQAMPVFNNLTFLVIESSMDIRWQAMPVLLKNCPRLETLVIKGGLVHCVAADCGDACTCISREEKGRSLASCPVKRLEIREFQGTLREMEMIKHFYYCFLCLKEMEIYVKDGRPQFLAPLASDSNPFKHLLGRNVIIKVHGSLT.

In terms of domain architecture, F-box spans Val-2–Asp-48. 7 LRR repeats span residues Leu-77–Asn-102, Ser-144–Ser-168, Val-169–Asn-194, Ile-214–Ala-240, Leu-270–Pro-301, Thr-303–Ser-327, and Ser-328–Gly-353.

The chain is Putative F-box/LRR-repeat protein At3g58880 from Arabidopsis thaliana (Mouse-ear cress).